Consider the following 159-residue polypeptide: MSSPQRRKAMPWALSLLLMGFQLLVTYAWCSEEEMGGNNKIVQDPMFLATVEFALNTFNVQSKEEHAYRLLRVLSSWREDSMDRKWRGKMVFSMNLQLRQTVCRKFEDDIDNCPFQESLELNNVRQGISFPQVHSCGCCMGCGVGTGAADKAIPRDKGK.

An N-terminal signal peptide occupies residues 1 to 28; that stretch reads MSSPQRRKAMPWALSLLLMGFQLLVTYA.

The protein belongs to the cystatin family. In terms of tissue distribution, expressed in heart, placenta, lung, liver, skeletal muscle and pancreas. Not expressed in brain. Expressed in epididymis, kidney, testis, spinal cord, and thymus with a strong expression in epididymis and kidney and a weak expression in the spinal cord and thymus.

It localises to the secreted. Its function is as follows. May be involved in testis development. May play a role in hematopoietic differentiation or inflammation. Has immunomodulatory and antimicrobial functions against Francisella tularensis, a Gram-negative bacteria. The chain is Cystatin-9 (CST9) from Homo sapiens (Human).